A 757-amino-acid polypeptide reads, in one-letter code: Endonuclease MutS2 (757 aa).

Residue 321-328 (GPNMGGKT) participates in ATP binding. Residues 681 to 756 (IDIRGMTVEE…GTGVTVVEVK (76 aa)) form the Smr domain.

It belongs to the DNA mismatch repair MutS family. MutS2 subfamily. As to quaternary structure, homodimer. Binds to stalled ribosomes, contacting rRNA. Interacts with MutL.

With respect to regulation, nuclease activity is stimulated by interaction with MutL and inhibited in the presence of non-hydrolytic ATP (ADPnP). ATPase activity is stimulated by DNA. Functionally, endonuclease that is involved in the suppression of homologous recombination and thus may have a key role in the control of bacterial genetic diversity. Has ATPase activity. Binds to DNA. Its function is as follows. Acts as a ribosome collision sensor, splitting the ribosome into its 2 subunits. Detects stalled/collided 70S ribosomes which it binds and splits by an ATP-hydrolysis driven conformational change. Acts upstream of the ribosome quality control system (RQC), a ribosome-associated complex that mediates the extraction of incompletely synthesized nascent chains from stalled ribosomes and their subsequent degradation. Probably generates substrates for RQC. The protein is Endonuclease MutS2 of Thermotoga maritima (strain ATCC 43589 / DSM 3109 / JCM 10099 / NBRC 100826 / MSB8).